The primary structure comprises 105 residues: Cell division protein FtsL (105 aa).

Residues Met-1–Lys-22 are Cytoplasmic-facing. Residues Ile-23–His-43 form a helical membrane-spanning segment. Topologically, residues Arg-44–Lys-105 are periplasmic.

The protein belongs to the FtsL family. In terms of assembly, part of a complex composed of FtsB, FtsL and FtsQ.

Its subcellular location is the cell inner membrane. Essential cell division protein. May link together the upstream cell division proteins, which are predominantly cytoplasmic, with the downstream cell division proteins, which are predominantly periplasmic. The protein is Cell division protein FtsL of Yersinia pestis.